The primary structure comprises 196 residues: uncharacterized protein (196 aa).

The protein localises to the mitochondrion. This is an uncharacterized protein from Paramecium tetraurelia.